The chain runs to 476 residues: MSPQTETKASVGFKAGVKDYKLTYYTPEYETKDTDILAAFRVTPQLGVPPEEAGAAVAAESSTGTWTTVWTDGLTSLDRYKGRCYHIEPVPGDPDQYICYVAYPLDLFEEGSVTNMFTSIVGNVFGFKALRALRLEDLRIPPAYSKTFQGPPHGIQVERDKLNKYGRPLLGCTIKPKLGLSAKNYGRACYECLRGGLDFTKDDENVNSQPFMRWRDRFVFCAEAIYKAQAETGEIKGHYLNATAGTCEEMIKRAVFARELGVPIVMHDYLTGGFTANTTLSHYCRDNGLLLHIHRAMHAVIDRQKNHGMHFRVLAKALRMSGGDHIHSGTVVGKLEGEREITLGFVDLLRDDFIEKDRSRGIFFTQDWVSMPGVIPVASGGIHVWHMPALTEIFGDDSVLQFGGGTLGHPWGNAPGAAANRVALEACVQARNEGRDLAREGNEIIKAACKWSAELAAACEIWKEIKFDGFKAMDTI.

A propeptide spanning residues 1 to 2 is cleaved from the precursor; the sequence is MS. Pro3 carries the post-translational modification N-acetylproline. Lys14 carries the N6,N6,N6-trimethyllysine modification. 2 residues coordinate substrate: Asn123 and Thr173. Catalysis depends on Lys175, which acts as the Proton acceptor. Substrate is bound at residue Lys177. Positions 201, 203, and 204 each coordinate Mg(2+). At Lys201 the chain carries N6-carboxylysine. His294 serves as the catalytic Proton acceptor. Residues Arg295, His327, and Ser379 each coordinate substrate.

The protein belongs to the RuBisCO large chain family. Type I subfamily. As to quaternary structure, heterohexadecamer of 8 large chains and 8 small chains; disulfide-linked. The disulfide link is formed within the large subunit homodimers. Mg(2+) is required as a cofactor. In terms of processing, the disulfide bond which can form in the large chain dimeric partners within the hexadecamer appears to be associated with oxidative stress and protein turnover.

It localises to the plastid. It is found in the chloroplast. The catalysed reaction is 2 (2R)-3-phosphoglycerate + 2 H(+) = D-ribulose 1,5-bisphosphate + CO2 + H2O. It carries out the reaction D-ribulose 1,5-bisphosphate + O2 = 2-phosphoglycolate + (2R)-3-phosphoglycerate + 2 H(+). Its function is as follows. RuBisCO catalyzes two reactions: the carboxylation of D-ribulose 1,5-bisphosphate, the primary event in carbon dioxide fixation, as well as the oxidative fragmentation of the pentose substrate in the photorespiration process. Both reactions occur simultaneously and in competition at the same active site. The polypeptide is Ribulose bisphosphate carboxylase large chain (Zea mays (Maize)).